We begin with the raw amino-acid sequence, 350 residues long: Phosphate acyltransferase (350 aa).

Belongs to the PlsX family. Homodimer. Probably interacts with PlsY.

Its subcellular location is the cytoplasm. It carries out the reaction a fatty acyl-[ACP] + phosphate = an acyl phosphate + holo-[ACP]. Its pathway is lipid metabolism; phospholipid metabolism. In terms of biological role, catalyzes the reversible formation of acyl-phosphate (acyl-PO(4)) from acyl-[acyl-carrier-protein] (acyl-ACP). This enzyme utilizes acyl-ACP as fatty acyl donor, but not acyl-CoA. The sequence is that of Phosphate acyltransferase from Magnetococcus marinus (strain ATCC BAA-1437 / JCM 17883 / MC-1).